The sequence spans 630 residues: MTTTVEQTAESHVFEADVARLLHMMVHSVYSDKGVFLRELISNGADACEKLRYEAIETPSLLAADAESRIMLRLDEESRQLVVEDNGIGMRRDEMIEALGTIARSGTRAFMERIAENKAAEGAQFIGQFGVGFYSCFMVAEHVDVISRRAGSEEAWKWSSDGKGSYSVEAANLVEAPARGTRIVLHLMEDAKTYTSRWTVERIVKEQSGHVPVAIRIVDKPGGEPVQITDGTALWTKSKSEVSKEDYTDFYRGLSGQYDEPALTVHFRAEGRHEYTALAFVPGTQPFDMFDPERKGRMKLYVKRVFITDDAELMPRYLRFVRGLIDTADLPLNVSREMIQESPILAAIRKGVTNRVITAIEKLADGESETYLTFWKNFGPVLKEGIYEDYERRAQLMALARFHTSASPEGHRSLAEYVKDAKEGQDAIYYLAGGSLDQLKASPQLEGFRARGIEVLLLTDSVDSFWVVNAPEFEGKAFKSITQGTADLAQFPRLDNQTPPEQDSAGLATFIGFAREKLAGQVADVRASDRLTESAVCLVAPEDGYDRQMEKILQNAGRLQGATKPILEINLAHPVIKAIAAVEDDASYQEDATFLLLDQARILDGERPQDPRKFAQRLARVFERSVRSEG.

The segment at 1-336 (MTTTVEQTAE…TADLPLNVSR (336 aa)) is a; substrate-binding. Residues 337–551 (EMIQESPILA…EDGYDRQMEK (215 aa)) form a b region. Residues 552–630 (ILQNAGRLQG…VFERSVRSEG (79 aa)) are c.

This sequence belongs to the heat shock protein 90 family. Homodimer.

It localises to the cytoplasm. In terms of biological role, molecular chaperone. Has ATPase activity. The polypeptide is Chaperone protein HtpG (Rhizobium etli (strain ATCC 51251 / DSM 11541 / JCM 21823 / NBRC 15573 / CFN 42)).